Here is a 96-residue protein sequence, read N- to C-terminus: Large ribosomal subunit protein uL23 (96 aa).

It belongs to the universal ribosomal protein uL23 family. Part of the 50S ribosomal subunit. Contacts protein L29, and trigger factor when it is bound to the ribosome.

Functionally, one of the early assembly proteins it binds 23S rRNA. One of the proteins that surrounds the polypeptide exit tunnel on the outside of the ribosome. Forms the main docking site for trigger factor binding to the ribosome. The polypeptide is Large ribosomal subunit protein uL23 (Syntrophus aciditrophicus (strain SB)).